The following is a 682-amino-acid chain: Potassium-transporting ATPase ATP-binding subunit (682 aa).

Transmembrane regions (helical) follow at residues 35–55, 62–82, 219–239, and 254–274; these read VMFI…AMAG, ATFT…ANFA, IALT…TATI, and VLVA…LSAI. The active-site 4-aspartylphosphate intermediate is the Asp307. Residues Asp344, Glu348, 377–384, and Lys395 each bind ATP; that span reads FTAQTRMS. Mg(2+) contacts are provided by Asp518 and Asp522. The next 3 helical transmembrane spans lie at 588–608, 616–636, and 656–676; these read FAII…LNVM, AILS…PLAL, and IYGL…DLLL.

Belongs to the cation transport ATPase (P-type) (TC 3.A.3) family. Type IA subfamily. As to quaternary structure, the system is composed of three essential subunits: KdpA, KdpB and KdpC.

It localises to the cell inner membrane. The catalysed reaction is K(+)(out) + ATP + H2O = K(+)(in) + ADP + phosphate + H(+). In terms of biological role, part of the high-affinity ATP-driven potassium transport (or Kdp) system, which catalyzes the hydrolysis of ATP coupled with the electrogenic transport of potassium into the cytoplasm. This subunit is responsible for energy coupling to the transport system and for the release of the potassium ions to the cytoplasm. This chain is Potassium-transporting ATPase ATP-binding subunit, found in Klebsiella pneumoniae (strain 342).